Consider the following 160-residue polypeptide: Small ribosomal subunit protein bS6 (160 aa).

The tract at residues 96–160 (RKVKRFIPRA…PRTRKVSKEQ (65 aa)) is disordered. Over residues 126–145 (TTDASKTEASTEATASKQSE) the composition is skewed to low complexity. Residues 151 to 160 (PRTRKVSKEQ) are compositionally biased toward basic residues.

It belongs to the bacterial ribosomal protein bS6 family.

In terms of biological role, binds together with bS18 to 16S ribosomal RNA. The polypeptide is Small ribosomal subunit protein bS6 (Metamycoplasma arthritidis (strain 158L3-1) (Mycoplasma arthritidis)).